Here is a 662-residue protein sequence, read N- to C-terminus: Translation factor GUF1, mitochondrial (662 aa).

A mitochondrion-targeting transit peptide spans 1 to 28 (MYIHSSRTVLARYGSRTPLLRPSVLGRY). One can recognise a tr-type G domain in the interval 62–244 (ENYRNFSIVA…AIVDHIPAPD (183 aa)). Residues 71-78 (AHVDHGKS), 137-141 (DTPGH), and 191-194 (NKID) each bind GTP.

It belongs to the TRAFAC class translation factor GTPase superfamily. Classic translation factor GTPase family. LepA subfamily.

The protein resides in the mitochondrion inner membrane. It carries out the reaction GTP + H2O = GDP + phosphate + H(+). In terms of biological role, promotes mitochondrial protein synthesis. May act as a fidelity factor of the translation reaction, by catalyzing a one-codon backward translocation of tRNAs on improperly translocated ribosomes. Binds to mitochondrial ribosomes in a GTP-dependent manner. The polypeptide is Translation factor GUF1, mitochondrial (Meyerozyma guilliermondii (strain ATCC 6260 / CBS 566 / DSM 6381 / JCM 1539 / NBRC 10279 / NRRL Y-324) (Yeast)).